The sequence spans 95 residues: Cell division topological specificity factor (95 aa).

Belongs to the MinE family.

Its function is as follows. Prevents the cell division inhibition by proteins MinC and MinD at internal division sites while permitting inhibition at polar sites. This ensures cell division at the proper site by restricting the formation of a division septum at the midpoint of the long axis of the cell. In Synechococcus sp. (strain CC9902), this protein is Cell division topological specificity factor.